The chain runs to 394 residues: NAD(P)H-quinone oxidoreductase subunit H (394 aa).

Belongs to the complex I 49 kDa subunit family. As to quaternary structure, NDH-1 can be composed of about 15 different subunits; different subcomplexes with different compositions have been identified which probably have different functions.

The protein resides in the cellular thylakoid membrane. It catalyses the reaction a plastoquinone + NADH + (n+1) H(+)(in) = a plastoquinol + NAD(+) + n H(+)(out). The enzyme catalyses a plastoquinone + NADPH + (n+1) H(+)(in) = a plastoquinol + NADP(+) + n H(+)(out). Functionally, NDH-1 shuttles electrons from an unknown electron donor, via FMN and iron-sulfur (Fe-S) centers, to quinones in the respiratory and/or the photosynthetic chain. The immediate electron acceptor for the enzyme in this species is believed to be plastoquinone. Couples the redox reaction to proton translocation, and thus conserves the redox energy in a proton gradient. Cyanobacterial NDH-1 also plays a role in inorganic carbon-concentration. This Prochlorococcus marinus (strain MIT 9313) protein is NAD(P)H-quinone oxidoreductase subunit H.